The following is a 551-amino-acid chain: uncharacterized protein (551 aa).

Disordered stretches follow at residues 66–111 (GNNK…STNL), 130–165 (PEATGLMKEDITPVVNTSKQSSTGTQEESSKPEKSN), 180–229 (AFNP…LSNL), and 277–303 (AFTSPRLPSPPQSTRPSSTRFPSVPLS). Phosphoserine is present on serine 74. Polar residues-rich tracts occupy residues 92–111 (GFSNRESMSENCFSKSSTNL) and 143–156 (VVNTSKQSSTGTQE). The segment covering 182–193 (NPSSVLPSNSSS) has biased composition (low complexity). Positions 204–226 (KETYQPNTFRRSPLKNDTGSVEL) are enriched in polar residues. Positions 290-299 (TRPSSTRFPS) are enriched in low complexity.

This is an uncharacterized protein from Schizosaccharomyces pombe (strain 972 / ATCC 24843) (Fission yeast).